The following is a 264-amino-acid chain: S-adenosylmethionine decarboxylase proenzyme (264 aa).

Serine 112 serves as the catalytic Schiff-base intermediate with substrate; via pyruvic acid. A Pyruvic acid (Ser); by autocatalysis modification is found at serine 112. Histidine 117 (proton acceptor; for processing activity) is an active-site residue. The Proton donor; for catalytic activity role is filled by cysteine 140.

It belongs to the prokaryotic AdoMetDC family. Type 2 subfamily. Heterooctamer of four alpha and four beta chains arranged as a tetramer of alpha/beta heterodimers. The cofactor is pyruvate. Is synthesized initially as an inactive proenzyme. Formation of the active enzyme involves a self-maturation process in which the active site pyruvoyl group is generated from an internal serine residue via an autocatalytic post-translational modification. Two non-identical subunits are generated from the proenzyme in this reaction, and the pyruvate is formed at the N-terminus of the alpha chain, which is derived from the carboxyl end of the proenzyme. The post-translation cleavage follows an unusual pathway, termed non-hydrolytic serinolysis, in which the side chain hydroxyl group of the serine supplies its oxygen atom to form the C-terminus of the beta chain, while the remainder of the serine residue undergoes an oxidative deamination to produce ammonia and the pyruvoyl group blocking the N-terminus of the alpha chain.

The enzyme catalyses S-adenosyl-L-methionine + H(+) = S-adenosyl 3-(methylsulfanyl)propylamine + CO2. It functions in the pathway amine and polyamine biosynthesis; S-adenosylmethioninamine biosynthesis; S-adenosylmethioninamine from S-adenosyl-L-methionine: step 1/1. Its function is as follows. Catalyzes the decarboxylation of S-adenosylmethionine to S-adenosylmethioninamine (dcAdoMet), the propylamine donor required for the synthesis of the polyamines spermine and spermidine from the diamine putrescine. The polypeptide is S-adenosylmethionine decarboxylase proenzyme (Yersinia pseudotuberculosis serotype I (strain IP32953)).